We begin with the raw amino-acid sequence, 217 residues long: Vacuolar protein-sorting-associated protein 37 homolog 1 (217 aa).

Residues 1-49 (MFNFWGSKDQQQGQSRPQEASSQSPWYSPSLVSSPSSSRPQSSGQISAQ) form a disordered region. Positions 8-20 (KDQQQGQSRPQEA) are enriched in polar residues. A compositionally biased stretch (low complexity) spans 21–47 (SSQSPWYSPSLVSSPSSSRPQSSGQIS). Residues 137 to 217 (QEKLNELERQ…IHLAAKTSNI (81 aa)) form the VPS37 C-terminal domain.

The protein belongs to the VPS37 family. In terms of assembly, component of the endosomal sorting required for transport complex I (ESCRT-I), composed of ELC, VPS28 and VPS37. Interacts with ELC.

It localises to the endosome. In terms of biological role, component of the ESCRT-I complex (endosomal sorting complex required for transport I), a regulator of vesicular trafficking process. Required for the sorting of endocytic ubiquitinated cargos into multivesicular bodies (MVBs). The polypeptide is Vacuolar protein-sorting-associated protein 37 homolog 1 (VPS37-1) (Arabidopsis thaliana (Mouse-ear cress)).